A 1026-amino-acid polypeptide reads, in one-letter code: Multidrug resistance protein MdtC (1026 aa).

Helical transmembrane passes span 15–35 (ILIAAAITLCGILGFRLLPVA), 333–353 (EVEETLAISVALVILVVFLFL), 360–380 (LIPAVAVPVSLIGTFAAMYLC), 387–407 (LSLMALTIATGFVVDDAIVVL), 431–451 (VGFTVISMSLSLVAVFLPLLL), 463–483 (FAVTLSVAIGISLVVSLTLTP), 528–548 (LVGVVFLGTVALNIWLYIAIP), 853–873 (LILIVAAIATVYIVLGILYES), 897–917 (LFNAPFSLIALIGIMLLIGIV), 953–973 (PIMMTTLAALFGALPLVLSDG), and 984–1004 (ITIVGGLVMSQLLTLYTTPVV).

The protein belongs to the resistance-nodulation-cell division (RND) (TC 2.A.6) family. MdtC subfamily. In terms of assembly, part of a tripartite efflux system composed of MdtA, MdtB and MdtC. MdtC forms a heteromultimer with MdtB.

Its subcellular location is the cell inner membrane. The chain is Multidrug resistance protein MdtC from Salmonella heidelberg (strain SL476).